The chain runs to 236 residues: Syntaxin-8 (236 aa).

Residues 1–215 (MAPDPWFSTY…MVDRKSASCG (215 aa)) are Cytoplasmic-facing. Residues 42 to 65 (VTIRALLQNLKEKIALLKDLLLRA) are a coiled coil. One can recognise a t-SNARE coiled-coil homology domain in the interval 145–207 (QKIIQEQDAG…RNETRRVNMV (63 aa)). Residue serine 160 is modified to Phosphoserine. A helical; Anchor for type IV membrane protein membrane pass occupies residues 216 to 232 (MIMVILLLLVAIVVVAV). Residues 233-236 (WPTN) lie on the Vesicular side of the membrane.

The protein belongs to the syntaxin family. Forms a SNARE complex with STX7, VTI1B and VAMP8 which functions in the homotypic fusion of late endosomes. Part of the SNARE core complex containing STX7, VAMP8 and VTI1B. Interacts with VAMP8. Interacts with HECTD3. Interacts with TPC1. Post-translationally, ubiquitinated by HECTD3. In terms of tissue distribution, highly expressed in heart. Also found in brain, kidney, liver, lung, placenta, skeletal muscle, spleen and pancreas.

Its subcellular location is the membrane. Vesicle trafficking protein that functions in the early secretory pathway, possibly by mediating retrograde transport from cis-Golgi membranes to the ER. The protein is Syntaxin-8 (STX8) of Homo sapiens (Human).